The sequence spans 179 residues: Ribulose bisphosphate carboxylase small subunit, chloroplastic 3 (179 aa).

Residues 1–58 (MASSATMLSSVATAARAAPAQASMVAPFVGLKSASAFPVTQKPATGLSTLPSNGGRVQ) constitute a chloroplast transit peptide.

The protein belongs to the RuBisCO small chain family. In terms of assembly, heterohexadecamer of 8 large and 8 small subunits.

Its subcellular location is the plastid. It localises to the chloroplast. Functionally, ruBisCO catalyzes two reactions: the carboxylation of D-ribulose 1,5-bisphosphate, the primary event in carbon dioxide fixation, as well as the oxidative fragmentation of the pentose substrate. Both reactions occur simultaneously and in competition at the same active site. Although the small subunit is not catalytic it is essential for maximal activity. This Fritillaria agrestis (Stinkbells) protein is Ribulose bisphosphate carboxylase small subunit, chloroplastic 3.